We begin with the raw amino-acid sequence, 91 residues long: Small ribosomal subunit protein bS18 (91 aa).

The protein belongs to the bacterial ribosomal protein bS18 family. In terms of assembly, part of the 30S ribosomal subunit. Forms a tight heterodimer with protein bS6.

Binds as a heterodimer with protein bS6 to the central domain of the 16S rRNA, where it helps stabilize the platform of the 30S subunit. This chain is Small ribosomal subunit protein bS18, found in Burkholderia vietnamiensis (strain G4 / LMG 22486) (Burkholderia cepacia (strain R1808)).